Here is a 549-residue protein sequence, read N- to C-terminus: Glucose-6-phosphate isomerase (549 aa).

Residues Lys80, Lys228, and Lys234 each carry the N6-acetyllysine modification. The Proton donor role is filled by Glu355. Catalysis depends on residues His386 and Lys514.

It belongs to the GPI family.

Its subcellular location is the cytoplasm. It carries out the reaction alpha-D-glucose 6-phosphate = beta-D-fructose 6-phosphate. The protein operates within carbohydrate biosynthesis; gluconeogenesis. It participates in carbohydrate degradation; glycolysis; D-glyceraldehyde 3-phosphate and glycerone phosphate from D-glucose: step 2/4. Catalyzes the reversible isomerization of glucose-6-phosphate to fructose-6-phosphate. The chain is Glucose-6-phosphate isomerase from Escherichia coli O17:K52:H18 (strain UMN026 / ExPEC).